Consider the following 21-residue polypeptide: APGDLLWSDEFDGAAGSAPNP.

The interval 1 to 21 (APGDLLWSDEFDGAAGSAPNP) is disordered.

It carries out the reaction Hydrolysis of (1-&gt;3)-beta-D-glucosidic linkages in (1-&gt;3)-beta-D-glucans.. The sequence is that of Glucan endo-1,3-beta-glucosidase 2 from Papiliotrema laurentii (Cryptococcus laurentii).